Reading from the N-terminus, the 392-residue chain is Putative purine permease 19 (392 aa).

Residues 1-16 (MGFHTKSPDRVTHEEE) show a composition bias toward basic and acidic residues. The interval 1–29 (MGFHTKSPDRVTHEEEANIGVDNQPRETT) is disordered. A Phosphoserine modification is found at S30. 10 helical membrane-spanning segments follow: residues 46-66 (ICIF…TLLL), 88-108 (WLQS…LLLW), 128-148 (LFLL…LYAI), 154-174 (VFFL…TTII), 182-202 (WIIL…TSSG), 220-240 (WCAF…QLGF), 254-274 (VILM…VGLF), 300-320 (LIGL…LVCL), 325-345 (FSNV…VLAF), and 354-374 (FFKE…VYSL).

The protein belongs to the purine permeases (TC 2.A.7.14) family.

It localises to the membrane. This chain is Putative purine permease 19 (PUP19), found in Arabidopsis thaliana (Mouse-ear cress).